The chain runs to 95 residues: Integration host factor subunit beta (95 aa).

It belongs to the bacterial histone-like protein family. As to quaternary structure, heterodimer of an alpha and a beta chain.

Functionally, this protein is one of the two subunits of integration host factor, a specific DNA-binding protein that functions in genetic recombination as well as in transcriptional and translational control. Involved in hydrogenase gene expression. The polypeptide is Integration host factor subunit beta (ihfB) (Rhodobacter capsulatus (Rhodopseudomonas capsulata)).